The primary structure comprises 304 residues: L-threonate dehydrogenase (304 aa).

NAD(+)-binding positions include 7–35 and Thr102; that span reads YAVA…TYGV. Lys178 is a catalytic residue. An NAD(+)-binding site is contributed by Lys246.

It belongs to the HIBADH-related family. L-threonate dehydrogenase subfamily.

The enzyme catalyses L-threonate + NAD(+) = 2-dehydro-L-erythronate + NADH + H(+). Functionally, catalyzes oxidation of L-threonate to 2-oxo-tetronate. Can use either NAD(+) or NADP(+) as cosubstrate, with a preference for NAD(+). The protein is L-threonate dehydrogenase of Pectobacterium atrosepticum (strain SCRI 1043 / ATCC BAA-672) (Erwinia carotovora subsp. atroseptica).